The primary structure comprises 337 residues: DNA-directed RNA polymerase subunit alpha (337 aa).

Residues 1–233 (MVREKVKVST…NLFIPFLHVE (233 aa)) are alpha N-terminal domain (alpha-NTD). The interval 267-337 (LAFQYIFIDQ…IEKAFQKKID (71 aa)) is alpha C-terminal domain (alpha-CTD).

Belongs to the RNA polymerase alpha chain family. As to quaternary structure, in plastids the minimal PEP RNA polymerase catalytic core is composed of four subunits: alpha, beta, beta', and beta''. When a (nuclear-encoded) sigma factor is associated with the core the holoenzyme is formed, which can initiate transcription.

It is found in the plastid. It localises to the chloroplast. The enzyme catalyses RNA(n) + a ribonucleoside 5'-triphosphate = RNA(n+1) + diphosphate. DNA-dependent RNA polymerase catalyzes the transcription of DNA into RNA using the four ribonucleoside triphosphates as substrates. The chain is DNA-directed RNA polymerase subunit alpha from Arabis hirsuta (Hairy rock-cress).